Here is a 109-residue protein sequence, read N- to C-terminus: Nucleoid-associated protein Psyc_0793 (109 aa).

The protein belongs to the YbaB/EbfC family. As to quaternary structure, homodimer.

The protein localises to the cytoplasm. It is found in the nucleoid. Its function is as follows. Binds to DNA and alters its conformation. May be involved in regulation of gene expression, nucleoid organization and DNA protection. The polypeptide is Nucleoid-associated protein Psyc_0793 (Psychrobacter arcticus (strain DSM 17307 / VKM B-2377 / 273-4)).